Here is a 447-residue protein sequence, read N- to C-terminus: MREIVHVQGGQCGNQIGAKFWEVISDEHGVDPTGTYHGDSDLQLERINVYYNEATGGRYVPRAVLMDLEPGTMDSVRAGPYGQLFRPDNFIFGQSGAGNNWAKGHYTEGAELIDSVLDVVRKEAEGCDCLQGFQITHSMGGGTGSGMGTLLIAKVREEYPDRMMCTYSVFPSPKVSDTVVEPYNATLSVHQLVENADEVMVIDNEALYDICFRTLKLTTPTYGDLNHLVSACISGVTCCLRFPGQLNSDLRKLAVNLIPFPRLHFFMIGFVPLTSRGSQQYRALTVPELTQQMFDAKNMMCAADPRHGRYLTASALFRGRMSTKEVDEQMLNVQNKNSSYFVEWIPNNIKASVCDIPPKGLKMSATFIGNSTAIQEMFKRVSEQFTAMFRRKAFLHWYTGEGMDEMEFTEAESNMNDLVSEYQQYQDATAEEEGEGDEEEAEGEAAA.

GTP is bound by residues glutamine 11, glutamate 69, serine 138, glycine 142, threonine 143, glycine 144, asparagine 204, and asparagine 226. Glutamate 69 contributes to the Mg(2+) binding site. The interval 424–447 (QYQDATAEEEGEGDEEEAEGEAAA) is disordered. Over residues 429-447 (TAEEEGEGDEEEAEGEAAA) the composition is skewed to acidic residues.

This sequence belongs to the tubulin family. As to quaternary structure, dimer of alpha and beta chains. A typical microtubule is a hollow water-filled tube with an outer diameter of 25 nm and an inner diameter of 15 nM. Alpha-beta heterodimers associate head-to-tail to form protofilaments running lengthwise along the microtubule wall with the beta-tubulin subunit facing the microtubule plus end conferring a structural polarity. Microtubules usually have 13 protofilaments but different protofilament numbers can be found in some organisms and specialized cells. Requires Mg(2+) as cofactor.

The protein resides in the cytoplasm. The protein localises to the cytoskeleton. Functionally, tubulin is the major constituent of microtubules, a cylinder consisting of laterally associated linear protofilaments composed of alpha- and beta-tubulin heterodimers. Microtubules grow by the addition of GTP-tubulin dimers to the microtubule end, where a stabilizing cap forms. Below the cap, tubulin dimers are in GDP-bound state, owing to GTPase activity of alpha-tubulin. The sequence is that of Tubulin beta-1 chain (TUBB1) from Cyanophora paradoxa.